The following is a 119-amino-acid chain: U-scoloptoxin(01)-Cw1a (119 aa).

An N-terminal signal peptide occupies residues 1–22 (MSKATNFYLFVLLGVFVALVRT). A Chitin-binding type-2 domain is found at 38–96 (SFSCDGKKPGYYADQQMECQVYHVCTPDNEHAVLLCGPGTIFNQKHLVCDFPSNYACAD). A disulfide bond links C73 and C86.

This sequence belongs to the scoloptoxin-01 family. Contains 3 disulfide bonds. As to expression, expressed by the venom gland.

The protein localises to the secreted. This is U-scoloptoxin(01)-Cw1a from Cormocephalus westwoodi (Westwood's green centipede).